The chain runs to 75 residues: Small ribosomal subunit protein bS18 (75 aa).

Belongs to the bacterial ribosomal protein bS18 family. As to quaternary structure, part of the 30S ribosomal subunit. Forms a tight heterodimer with protein bS6.

Binds as a heterodimer with protein bS6 to the central domain of the 16S rRNA, where it helps stabilize the platform of the 30S subunit. This is Small ribosomal subunit protein bS18 from Shewanella baltica (strain OS223).